A 284-amino-acid polypeptide reads, in one-letter code: Pantothenate synthetase (284 aa).

Residue 30-37 (MGNLHDGH) participates in ATP binding. Residue H37 is the Proton donor of the active site. Residue Q61 participates in (R)-pantoate binding. Position 61 (Q61) interacts with beta-alanine. 149-152 (GEKD) provides a ligand contact to ATP. Position 155 (Q155) interacts with (R)-pantoate. ATP is bound by residues V178 and 186-189 (LSSR).

It belongs to the pantothenate synthetase family. In terms of assembly, homodimer.

It is found in the cytoplasm. The enzyme catalyses (R)-pantoate + beta-alanine + ATP = (R)-pantothenate + AMP + diphosphate + H(+). The protein operates within cofactor biosynthesis; (R)-pantothenate biosynthesis; (R)-pantothenate from (R)-pantoate and beta-alanine: step 1/1. Functionally, catalyzes the condensation of pantoate with beta-alanine in an ATP-dependent reaction via a pantoyl-adenylate intermediate. The chain is Pantothenate synthetase from Erwinia tasmaniensis (strain DSM 17950 / CFBP 7177 / CIP 109463 / NCPPB 4357 / Et1/99).